The primary structure comprises 201 residues: CASP-like protein 2B2 (201 aa).

Residues methionine 1–arginine 28 are Cytoplasmic-facing. A helical membrane pass occupies residues valine 29–valine 49. The Extracellular segment spans residues alanine 50–lysine 71. Residues alanine 72 to valine 92 traverse the membrane as a helical segment. The Cytoplasmic segment spans residues cysteine 93 to proline 108. Residues leucine 109 to alanine 129 form a helical membrane-spanning segment. Topologically, residues alanine 130 to alanine 166 are extracellular. Residues serine 167 to phenylalanine 187 traverse the membrane as a helical segment. At arginine 188–tryptophan 201 the chain is on the cytoplasmic side.

It belongs to the Casparian strip membrane proteins (CASP) family. As to quaternary structure, homodimer and heterodimers.

The protein localises to the cell membrane. The protein is CASP-like protein 2B2 of Arabidopsis lyrata subsp. lyrata (Lyre-leaved rock-cress).